The sequence spans 32 residues: Dermatoxin-J1 (32 aa).

At Gln32 the chain carries Glutamine amide.

In terms of tissue distribution, expressed by the skin glands.

It is found in the secreted. Antimicrobial peptide. The protein is Dermatoxin-J1 of Phasmahyla jandaia (Jandaia leaf frog).